The primary structure comprises 132 residues: Small ribosomal subunit protein uS8c (132 aa).

Belongs to the universal ribosomal protein uS8 family. As to quaternary structure, part of the 30S ribosomal subunit.

It localises to the plastid. Its subcellular location is the chloroplast. Its function is as follows. One of the primary rRNA binding proteins, it binds directly to 16S rRNA central domain where it helps coordinate assembly of the platform of the 30S subunit. This chain is Small ribosomal subunit protein uS8c (rps8), found in Physcomitrium patens (Spreading-leaved earth moss).